Consider the following 119-residue polypeptide: Large ribosomal subunit protein uL18 (119 aa).

This sequence belongs to the universal ribosomal protein uL18 family. In terms of assembly, part of the 50S ribosomal subunit; part of the 5S rRNA/L5/L18/L25 subcomplex. Contacts the 5S and 23S rRNAs.

Its function is as follows. This is one of the proteins that bind and probably mediate the attachment of the 5S RNA into the large ribosomal subunit, where it forms part of the central protuberance. This chain is Large ribosomal subunit protein uL18, found in Solibacter usitatus (strain Ellin6076).